A 199-amino-acid polypeptide reads, in one-letter code: GTP cyclohydrolase-2 (199 aa).

R52 to E56 is a GTP binding site. Zn(2+)-binding residues include C57, C68, and C70. Residues Q73, E94–R96, and T116 each bind GTP. The active-site Proton acceptor is the D128. Catalysis depends on R130, which acts as the Nucleophile. Residues T151 and K156 each contribute to the GTP site.

This sequence belongs to the GTP cyclohydrolase II family. The cofactor is Zn(2+).

The enzyme catalyses GTP + 4 H2O = 2,5-diamino-6-hydroxy-4-(5-phosphoribosylamino)-pyrimidine + formate + 2 phosphate + 3 H(+). Its pathway is cofactor biosynthesis; riboflavin biosynthesis; 5-amino-6-(D-ribitylamino)uracil from GTP: step 1/4. Catalyzes the conversion of GTP to 2,5-diamino-6-ribosylamino-4(3H)-pyrimidinone 5'-phosphate (DARP), formate and pyrophosphate. In Aliivibrio fischeri (strain ATCC 700601 / ES114) (Vibrio fischeri), this protein is GTP cyclohydrolase-2.